The primary structure comprises 640 residues: MTIPCSRPLFIEPFDLYLFGMGRHRHLYRILGAHPAVQDGEAGYRFAVWAPNARSVHLSGDCNGWRHEGCPLFPVGVSGVWAAFVPGVRRGSLYKFVVRGADGRQEQKADPFALWAEMRPGVASVAWDIDNHAWGDGAWMAERARQGLPLERPVSIYEVHLGSWRRRHGDGHPFLTYDELGDQLIPYATGMGFTHLELLPVAEHPLDQSWGYQTGHYYAPTSRFGSPEGFKRFVDRCHQAGLGVILDWVPAHFPRDAWSLGRFDGTALYEHLDPRLGEHPDWGTYIFNYGRNEVRNFLTANALYWLREFHIDGLRMDAVASMLYLDYSREAGQWLPNRHGGRENLDAVDFLREVNTVIHAEFPGAMTLAEESTAWPGVSRPVYTGGLGFSFKWNMGWMHDTLGYLAEDPIHRAYHHGSLTFSMLYAFSENFVLPLSHDEVVHGKGALLSKMPGDMWQQQANLRLLYAYQWAHPGKKLLFMGGEFGQWNEWDESRELDWCLYRFPAHEGIARLVGDLNRLLRSEPAMHRRDHDWSGFRWVDFADYGSSVISFLRLAEGERPLLWIFNFTPVVRRFYRVPCPRGGTWRELCNTDSAYYGGSDVGNAGAVMAREDHWGGGHFIELTLPPLAAMCFAPVTGQGT.

Residue Asp-317 is the Nucleophile of the active site. The Proton donor role is filled by Glu-370.

The protein belongs to the glycosyl hydrolase 13 family. GlgB subfamily. As to quaternary structure, monomer.

It catalyses the reaction Transfers a segment of a (1-&gt;4)-alpha-D-glucan chain to a primary hydroxy group in a similar glucan chain.. The protein operates within glycan biosynthesis; glycogen biosynthesis. Catalyzes the formation of the alpha-1,6-glucosidic linkages in glycogen by scission of a 1,4-alpha-linked oligosaccharide from growing alpha-1,4-glucan chains and the subsequent attachment of the oligosaccharide to the alpha-1,6 position. The polypeptide is 1,4-alpha-glucan branching enzyme GlgB (Nitratidesulfovibrio vulgaris (strain DP4) (Desulfovibrio vulgaris)).